A 476-amino-acid polypeptide reads, in one-letter code: PTS system N-acetylmuramic acid-specific EIIBC component (476 aa).

Residues 1-89 (MATIDNAMIH…KASLGDNMSS (89 aa)) enclose the PTS EIIB type-1 domain. Cysteine 28 serves as the catalytic Phosphocysteine intermediate; for EIIB activity. Residues 116–476 (AKFATIFTPL…FFATKDVDLS (361 aa)) form the PTS EIIC type-1 domain. The next 10 membrane-spanning stretches (helical) occupy residues 118 to 138 (FATI…LLGL), 160 to 180 (LIAY…ILIG), 186 to 206 (AFGG…LGYN), 220 to 240 (FFGL…AAIV), 265 to 285 (TLLI…VYLF), 304 to 324 (VLAG…FVPV), 337 to 357 (LFPV…ALYF), 371 to 391 (GAII…VTLP), 396 to 416 (FITA…IAYL), and 443 to 463 (VLPA…TGFI).

Its subcellular location is the cell inner membrane. It carries out the reaction N-acetyl-beta-D-muramate(out) + N(pros)-phospho-L-histidyl-[protein] = N-acetyl-beta-D-muramate 6-phosphate(in) + L-histidyl-[protein]. Its function is as follows. The phosphoenolpyruvate-dependent sugar phosphotransferase system (sugar PTS), a major carbohydrate active transport system, catalyzes the phosphorylation of incoming sugar substrates concomitantly with their translocation across the cell membrane. This system is involved in N-acetylmuramic acid (MurNAc) transport, yielding cytoplasmic MurNAc-6-P. Is also able to take up anhydro-N-acetylmuramic acid (anhMurNAc), but cannot phosphorylate the carbon 6, probably because of the 1,6-anhydro ring. This is PTS system N-acetylmuramic acid-specific EIIBC component (murP) from Pasteurella multocida (strain Pm70).